A 277-amino-acid polypeptide reads, in one-letter code: MKVISSIHELRDQLRGQNRTAFVPTMGNLHEGHLSLMRLARQHGDPVVASIFVNRLQFGPNEDFDKYPRTMEADIEKLQKENVYVLFAPTEKDLYPEPQEYRVHPPHDLGDILEGEFRPGFFQGVCTVVMKLMSCVQPRVAVFGKKDYQQLMIVRRMCNQFALPTDIIAAETVRDADGLALSSRNRYLQAAERAEAPRLAAELNQVREAVLGGERDFAKIERAAMAALAARGWQPDYIAVRKRSNLLPPGPEDANAELVVLAAARLGATRLIDNLEI.

26 to 33 is a binding site for ATP; sequence MGNLHEGH. Histidine 33 acts as the Proton donor in catalysis. A (R)-pantoate-binding site is contributed by glutamine 57. Glutamine 57 provides a ligand contact to beta-alanine. 144 to 147 provides a ligand contact to ATP; it reads GKKD. Residue glutamine 150 participates in (R)-pantoate binding. ATP is bound by residues valine 173 and 181–184; that span reads LSSR.

This sequence belongs to the pantothenate synthetase family. Homodimer.

Its subcellular location is the cytoplasm. It catalyses the reaction (R)-pantoate + beta-alanine + ATP = (R)-pantothenate + AMP + diphosphate + H(+). The protein operates within cofactor biosynthesis; (R)-pantothenate biosynthesis; (R)-pantothenate from (R)-pantoate and beta-alanine: step 1/1. Catalyzes the condensation of pantoate with beta-alanine in an ATP-dependent reaction via a pantoyl-adenylate intermediate. This chain is Pantothenate synthetase, found in Paraburkholderia xenovorans (strain LB400).